A 455-amino-acid polypeptide reads, in one-letter code: ATP-dependent protease ATPase subunit HslU (455 aa).

ATP contacts are provided by residues V23, 65–70 (GVGKTE), D266, E333, and R405.

Belongs to the ClpX chaperone family. HslU subfamily. A double ring-shaped homohexamer of HslV is capped on each side by a ring-shaped HslU homohexamer. The assembly of the HslU/HslV complex is dependent on binding of ATP.

The protein resides in the cytoplasm. ATPase subunit of a proteasome-like degradation complex; this subunit has chaperone activity. The binding of ATP and its subsequent hydrolysis by HslU are essential for unfolding of protein substrates subsequently hydrolyzed by HslV. HslU recognizes the N-terminal part of its protein substrates and unfolds these before they are guided to HslV for hydrolysis. The protein is ATP-dependent protease ATPase subunit HslU of Xanthomonas campestris pv. campestris (strain 8004).